Reading from the N-terminus, the 119-residue chain is Large ribosomal subunit protein bL17 (119 aa).

The protein belongs to the bacterial ribosomal protein bL17 family. Part of the 50S ribosomal subunit. Contacts protein L32.

In Psychrobacter sp. (strain PRwf-1), this protein is Large ribosomal subunit protein bL17.